The following is a 57-amino-acid chain: MAVPKKKTSKTKRDQRKANWKHQAALEAQKALSLGKSILTGRSTFVYPQDEAEDEDE.

Residues 1-20 (MAVPKKKTSKTKRDQRKANW) show a composition bias toward basic residues. Positions 1 to 21 (MAVPKKKTSKTKRDQRKANWK) are disordered.

Belongs to the bacterial ribosomal protein bL32 family.

The sequence is that of Large ribosomal subunit protein bL32 from Rippkaea orientalis (strain PCC 8801 / RF-1) (Cyanothece sp. (strain PCC 8801)).